The sequence spans 466 residues: CCA-adding enzyme (466 aa).

Residues Ser55 and Arg58 each contribute to the ATP site. Residues Ser55 and Arg58 each coordinate CTP. Residues Asp67, Asp69, and Asp118 each contribute to the Mg(2+) site. Positions 141, 161, and 170 each coordinate ATP. The CTP site is built by His141, Lys161, and Tyr170.

The protein belongs to the tRNA nucleotidyltransferase/poly(A) polymerase family. Archaeal CCA-adding enzyme subfamily. Homodimer. The cofactor is Mg(2+).

It carries out the reaction a tRNA precursor + 2 CTP + ATP = a tRNA with a 3' CCA end + 3 diphosphate. The catalysed reaction is a tRNA with a 3' CCA end + 2 CTP + ATP = a tRNA with a 3' CCACCA end + 3 diphosphate. In terms of biological role, catalyzes the addition and repair of the essential 3'-terminal CCA sequence in tRNAs without using a nucleic acid template. Adds these three nucleotides in the order of C, C, and A to the tRNA nucleotide-73, using CTP and ATP as substrates and producing inorganic pyrophosphate. tRNA 3'-terminal CCA addition is required both for tRNA processing and repair. Also involved in tRNA surveillance by mediating tandem CCA addition to generate a CCACCA at the 3' terminus of unstable tRNAs. While stable tRNAs receive only 3'-terminal CCA, unstable tRNAs are marked with CCACCA and rapidly degraded. This chain is CCA-adding enzyme, found in Haloarcula marismortui (strain ATCC 43049 / DSM 3752 / JCM 8966 / VKM B-1809) (Halobacterium marismortui).